A 365-amino-acid polypeptide reads, in one-letter code: MKKQYRIAVLPGDGIGPEVMKEAYKILKILQNYFSLHIEIKEFNIGGIALDKEGVALPKDTLLGCENSDAILFGSVGGKKWNNLPIEKRPERASLLPLRKHFNLFYNLRPAKLYSELRFLSPLRSKTXIKNGFDILCIRELTGGIYFGEPRGRLKKNNIEYAFDTEVYYDYEINRIAHVAFQLARTRKNKVCSIDKANVLNSSLLWREIVTKVSKNYPDVHLSHLYIDNATMQIIQNPNQFDILLCSNLFGDILSDECAIITGSIGMLPSASLNEKNFGLYEPAGGSAPDIAGKNIANPIAQILSLSMLVRYGMNLKKIANKIDQSVISVLKKGYRTFDISDDNNXFLKTNEMGDVIADALINGE.

Position 78-91 (Gly-78–Glu-91) interacts with NAD(+). Positions 99, 109, 139, and 228 each coordinate substrate. Residues Asp-228, Asp-252, and Asp-256 each coordinate Mg(2+). An NAD(+)-binding site is contributed by Gly-286–Asn-298.

It belongs to the isocitrate and isopropylmalate dehydrogenases family. LeuB type 1 subfamily. As to quaternary structure, homodimer. It depends on Mg(2+) as a cofactor. Mn(2+) serves as cofactor.

The protein localises to the cytoplasm. The catalysed reaction is (2R,3S)-3-isopropylmalate + NAD(+) = 4-methyl-2-oxopentanoate + CO2 + NADH. It functions in the pathway amino-acid biosynthesis; L-leucine biosynthesis; L-leucine from 3-methyl-2-oxobutanoate: step 3/4. Its function is as follows. Catalyzes the oxidation of 3-carboxy-2-hydroxy-4-methylpentanoate (3-isopropylmalate) to 3-carboxy-4-methyl-2-oxopentanoate. The product decarboxylates to 4-methyl-2 oxopentanoate. The chain is 3-isopropylmalate dehydrogenase from Buchnera aphidicola subsp. Macrosiphoniella ludovicianae.